The sequence spans 223 residues: MGQKVHPHGLRVGVIKEWDAKWYADKKNFADNLVEDHKIRNFVKKNSYAAGVSRIEIERAAKRIKLNIYTAKPGMIIGKGGQGIESLKNKLQKIVSNKNILINIVEVKRPEADAQLIAENIAQQLEKRIAFRRAMKQSIQRAMRSGVKGIKTACSGRLAGAEIARTEHYNEGTIPLQTLRADIDYGFAEADTTYGKIGVKVWVYKGEVLPARKNINEKEEANA.

One can recognise a KH type-2 domain in the interval 39 to 108 (IRNFVKKNSY…NILINIVEVK (70 aa)).

The protein belongs to the universal ribosomal protein uS3 family. Part of the 30S ribosomal subunit. Forms a tight complex with proteins S10 and S14.

Its function is as follows. Binds the lower part of the 30S subunit head. Binds mRNA in the 70S ribosome, positioning it for translation. This chain is Small ribosomal subunit protein uS3, found in Clostridium botulinum (strain Hall / ATCC 3502 / NCTC 13319 / Type A).